The chain runs to 849 residues: DNA mismatch repair protein MutS (849 aa).

602–609 lines the ATP pocket; sequence GPNMSGKS.

Belongs to the DNA mismatch repair MutS family.

Its function is as follows. This protein is involved in the repair of mismatches in DNA. It is possible that it carries out the mismatch recognition step. This protein has a weak ATPase activity. The protein is DNA mismatch repair protein MutS of Streptococcus mutans serotype c (strain ATCC 700610 / UA159).